We begin with the raw amino-acid sequence, 217 residues long: Translation initiation factor 6 (217 aa).

Belongs to the eIF-6 family.

Functionally, binds to the 50S ribosomal subunit and prevents its association with the 30S ribosomal subunit to form the 70S initiation complex. This Picrophilus torridus (strain ATCC 700027 / DSM 9790 / JCM 10055 / NBRC 100828 / KAW 2/3) protein is Translation initiation factor 6.